A 241-amino-acid polypeptide reads, in one-letter code: Sugar fermentation stimulation protein homolog (241 aa).

Belongs to the SfsA family.

In Halorhodospira halophila (strain DSM 244 / SL1) (Ectothiorhodospira halophila (strain DSM 244 / SL1)), this protein is Sugar fermentation stimulation protein homolog.